The sequence spans 615 residues: Ectoine/glycine betaine/proline transporter EctP (615 aa).

A run of 12 helical transmembrane segments spans residues 24 to 44, 62 to 82, 102 to 122, 156 to 176, 207 to 227, 240 to 260, 275 to 295, 329 to 349, 360 to 380, 417 to 437, 463 to 483, and 489 to 509; these read FIFS…IALG, LGWM…GIFA, IVWF…FWGV, FGIH…YFIY, LAIV…VLQI, VSWV…ISVA, IAMA…LTLL, WTVF…MFVA, FIGG…SIFG, LTGI…ITSI, WACT…SSGI, and VVII…FSLL. Disordered stretches follow at residues 524-562 and 589-615; these read TRQW…LEHD and PEEA…EYDI. Composition is skewed to basic and acidic residues over residues 526 to 540 and 600 to 615; these read QWEK…EEHS and KIVE…EYDI.

Belongs to the BCCT transporter (TC 2.A.15) family.

Its subcellular location is the cell membrane. Involved in the uptake of osmoprotectants. Can transport ectoine, proline and glycine betaine. Na(+) is probably the coupling ion. This chain is Ectoine/glycine betaine/proline transporter EctP, found in Corynebacterium glutamicum (strain ATCC 13032 / DSM 20300 / JCM 1318 / BCRC 11384 / CCUG 27702 / LMG 3730 / NBRC 12168 / NCIMB 10025 / NRRL B-2784 / 534).